The sequence spans 495 residues: MATTIFSRFSIYFCAMLLCQGSMAQLFNPSTNPWHSPRQGSFRECRFDRLQAFEPLRKVRSEAGVTEYFDEKNELFQCTGTFVIRRVIQPQGLLVPRYSNTPGLVYIIQGRGSMGLTFPGCPATYQQQFQQFSSQGQSQSQKFRDEHQKIHQFRQGDVVALPAGVAHWFYNDGDASVVAIYVYDINNSANQLEPRQKEFLLAGNNNRVQQVYGSSIEQHSSQNIFNGFGTELLSEALGINTVAAKRLQSQNDQRGEIVHVKNGLQLLKPTLTQQQEQAQAQYQEVQYSEQQQTSSRWNGLEENFCTIKARVNIENPSRADSYNPRAGRISSVNSQKFPILNLIQMSATRVNLYQNAILSPFWNVNAHSLVYMIQGQSRVQVVSNFGKTVFDGVLRPGQLLIIPQHYAVLKKAEREGCQYIAIKTNANAFVSHLAGKNSVFRALPVDVVANAYRISREQARSIKNNRGEEHGAFTPRFQQQYYPGFSNESESETSE.

The signal sequence occupies residues 1 to 24 (MATTIFSRFSIYFCAMLLCQGSMA). 2 disulfides stabilise this stretch: Cys45–Cys78 and Cys121–Cys305. 2 consecutive Cupin type-1 domains span residues 50–245 (LQAF…VAAK) and 311–460 (VNIE…EQAR). The segment at 464-495 (NNRGEEHGAFTPRFQQQYYPGFSNESESETSE) is disordered.

The protein belongs to the 11S seed storage protein (globulins) family. Hexamer; each subunit is composed of an acidic and a basic chain derived from a single precursor and linked by a disulfide bond.

Seed storage protein. The chain is Glutelin type-B 2 (GLUB2) from Oryza sativa subsp. japonica (Rice).